The chain runs to 482 residues: Class E basic helix-loop-helix protein 41 (482 aa).

K31 is covalently cross-linked (Glycyl lysine isopeptide (Lys-Gly) (interchain with G-Cter in SUMO2)). The bHLH domain occupies 44–99; sequence TYKLPHRLIEKKRRDRINECIAQLKDLLPEHLKLTTLGHLEKAVVLELTLKHLKAL. The necessary for interaction with RXRA and repressor activity towards RXRA stretch occupies residues 67-71; the sequence is LKDLL. Residue K121 forms a Glycyl lysine isopeptide (Lys-Gly) (interchain with G-Cter in SUMO2) linkage. Positions 131-166 constitute an Orange domain; that stretch reads FHSGFQTCAKEVLQYLSRFESWTPREPRCVQLINHL. Residue K210 forms a Glycyl lysine isopeptide (Lys-Gly) (interchain with G-Cter in SUMO2) linkage. Disordered stretches follow at residues 228–298 and 438–482; these read AELA…GGAA and VAPL…KEAP. Positions 246-256 are enriched in basic and acidic residues; it reads AEARPDREKGK. Residue K266 forms a Glycyl lysine isopeptide (Lys-Gly) (interchain with G-Cter in SUMO2) linkage. The segment covering 285–297 has biased composition (gly residues); that stretch reads RGGGSGGGPGGGA.

As to quaternary structure, homodimer. Heterodimer with BHLHE40/DEC1. Interacts with CIART and BMAL1. Interacts with RXRA. Interacts with NR0B2 and HNF1A. Highly expressed in skeletal muscle and brain, moderately expressed in pancreas and heart, weakly expressed in placenta, lung, liver and kidney.

The protein resides in the nucleus. Its function is as follows. Transcriptional repressor involved in the regulation of the circadian rhythm by negatively regulating the activity of the clock genes and clock-controlled genes. Acts as the negative limb of a novel autoregulatory feedback loop (DEC loop) which differs from the one formed by the PER and CRY transcriptional repressors (PER/CRY loop). Both these loops are interlocked as it represses the expression of PER1 and in turn is repressed by PER1/2 and CRY1/2. Represses the activity of the circadian transcriptional activator: CLOCK-BMAL1 heterodimer by competing for the binding to E-box elements (5'-CACGTG-3') found within the promoters of its target genes. Negatively regulates its own expression and the expression of DBP and BHLHE41/DEC2. Acts as a corepressor of RXR and the RXR-LXR heterodimers and represses the ligand-induced RXRA/B/G, NR1H3/LXRA, NR1H4 and VDR transactivation activity. Inhibits HNF1A-mediated transactivation of CYP1A2, CYP2E1 AND CYP3A11. The chain is Class E basic helix-loop-helix protein 41 from Homo sapiens (Human).